The sequence spans 154 residues: uncharacterized protein (154 aa).

The segment at 104 to 124 is disordered; sequence NNNNNDNDNNNKEKEDNDEKE. A compositionally biased stretch (basic and acidic residues) spans 112 to 124; that stretch reads NNNKEKEDNDEKE.

This is an uncharacterized protein from Dictyostelium discoideum (Social amoeba).